A 235-amino-acid chain; its full sequence is MDMSLVFFSQLNMCESKEKTFFKLMHGSGKEETSIEAKIRAKEKRNRLSLLLQRPDFHGETQASRSALLAKETRVSPEEAVKWAESFDKLLSHRDGVDAFTRFLKTEFSEENIEFWVACEDFKKCKEPQQIILKAKAIYEKFIQNDAPKEVNIDFHTKEVIAKSIAQPTLHSFDTAQSRVYQLMEHDSYKRFLKSETYLHLIEGRPQRPTNLRRRSRSFTYNDFQDVKSDVAIWL.

At Ser-49 the chain carries Phosphoserine. In terms of domain architecture, RGS spans 86-202; it reads SFDKLLSHRD…LKSETYLHLI (117 aa). A phosphoserine mark is found at Ser-216 and Ser-218.

As to expression, expressed in bone marrow, spleen, fetal liver and lung. At very low levels expressed in heart.

It localises to the cytoplasm. Functionally, inhibits signal transduction by increasing the GTPase activity of G protein alpha subunits thereby driving them into their inactive GDP-bound form. Binds to G(i) alpha-1, G(i) alpha-2, G(i) alpha-3 and G(q) alpha. The chain is Regulator of G-protein signaling 18 (Rgs18) from Mus musculus (Mouse).